The chain runs to 728 residues: Catalase B (728 aa).

Residues histidine 107 and asparagine 180 contribute to the active site. Tyrosine 394 contacts heme.

The protein belongs to the catalase family. It depends on heme as a cofactor.

Its subcellular location is the secreted. The catalysed reaction is 2 H2O2 = O2 + 2 H2O. Its function is as follows. Occurs in almost all aerobically respiring organisms and serves to protect cells from the toxic effects of hydrogen peroxide. In Ajellomyces capsulatus (Darling's disease fungus), this protein is Catalase B (CATB).